Reading from the N-terminus, the 269-residue chain is Adenylate kinase (269 aa).

61-66 (GAGKGT) serves as a coordination point for ATP. Positions 81–110 (ATGDMLREQVARQTELGKAAKQIMDQGGLV) are NMP. AMP contacts are provided by residues threonine 82, arginine 87, 108-110 (GLV), 137-140 (GFPR), and glutamine 144. Positions 178-215 (GRLVHPASGRSYHKEFNPPKKPMTDDITGEPLIQRSDD) are LID. Residues arginine 179 and 188 to 189 (SY) each bind ATP. Positions 212 and 223 each coordinate AMP. Position 251 (glutamine 251) interacts with ATP.

Belongs to the adenylate kinase family. AK2 subfamily. In terms of assembly, monomer.

It localises to the cytoplasm. The protein localises to the cytosol. It is found in the mitochondrion intermembrane space. It carries out the reaction AMP + ATP = 2 ADP. In terms of biological role, catalyzes the reversible transfer of the terminal phosphate group between ATP and AMP. Plays an important role in cellular energy homeostasis and in adenine nucleotide metabolism. Adenylate kinase activity is critical for regulation of the phosphate utilization and the AMP de novo biosynthesis pathways. In Cryptococcus neoformans var. neoformans serotype D (strain B-3501A) (Filobasidiella neoformans), this protein is Adenylate kinase.